The primary structure comprises 185 residues: uncharacterized protein (185 aa).

Helical transmembrane passes span 4 to 24 (IAWM…LGLA), 35 to 55 (GLLF…ATGV), 60 to 80 (GASA…SIAY), 123 to 143 (VLAY…INDS), and 152 to 172 (ILKL…SYFI).

It is found in the cell membrane. This is an uncharacterized protein from Bacillus subtilis (strain 168).